Consider the following 179-residue polypeptide: tRNA (cytidine(56)-2'-O)-methyltransferase (179 aa).

Residues L82, 112–116, and 130–137 each bind S-adenosyl-L-methionine; these read GAEKV and VGNQPHSE.

Belongs to the aTrm56 family. As to quaternary structure, homodimer.

The protein localises to the cytoplasm. It catalyses the reaction cytidine(56) in tRNA + S-adenosyl-L-methionine = 2'-O-methylcytidine(56) in tRNA + S-adenosyl-L-homocysteine + H(+). In terms of biological role, specifically catalyzes the AdoMet-dependent 2'-O-ribose methylation of cytidine at position 56 in tRNAs. The sequence is that of tRNA (cytidine(56)-2'-O)-methyltransferase from Methanococcus maripaludis (strain DSM 14266 / JCM 13030 / NBRC 101832 / S2 / LL).